The following is an 879-amino-acid chain: DNA mismatch repair protein MutS (879 aa).

629 to 636 (GPNMAGKS) serves as a coordination point for ATP. Residues 824-845 (VGGQPQKELSEHKPHQPSLFAP) form a disordered region.

Belongs to the DNA mismatch repair MutS family.

Functionally, this protein is involved in the repair of mismatches in DNA. It is possible that it carries out the mismatch recognition step. This protein has a weak ATPase activity. This Desulfotalea psychrophila (strain LSv54 / DSM 12343) protein is DNA mismatch repair protein MutS.